A 498-amino-acid chain; its full sequence is RuvB-like helicase 2 (498 aa).

79–86 is an ATP binding site; sequence GPPSTGKT. The segment at 458–498 is disordered; that stretch reads VTIGQESTDGSTQPQAKQQEVAQPEATQPQSQPEDDKMETD. The segment covering 461–489 has biased composition (polar residues); sequence GQESTDGSTQPQAKQQEVAQPEATQPQSQ.

The protein belongs to the RuvB family. May form heterododecamers with RVB1. Component of the SWR1 chromatin remodeling complex, the INO80 chromatin remodeling complex, and of the R2TP complex.

It is found in the nucleus. It carries out the reaction ATP + H2O = ADP + phosphate + H(+). Its function is as follows. DNA helicase which participates in several chromatin remodeling complexes, including the SWR1 and the INO80 complexes. The SWR1 complex mediates the ATP-dependent exchange of histone H2A for the H2A variant HZT1 leading to transcriptional regulation of selected genes by chromatin remodeling. The INO80 complex remodels chromatin by shifting nucleosomes and is involved in DNA repair. Also involved in pre-rRNA processing. This Candida albicans (strain SC5314 / ATCC MYA-2876) (Yeast) protein is RuvB-like helicase 2 (RVB2).